The primary structure comprises 1166 residues: MNDEAVAFSQAVQVVDPDVRAHVYSLVTALGGFNGEDADRYVLGDDALACLRDIRRWLKLYDEKYHRMDVARCLGEANLVNGDLLPIFSLWWSTGQKSKYMSRIALACLELLVPLTWPLEVHGEMTVNHHRHFPYLQHAQVSYKRGLLSRGDLNFLRTIIRIGLPSMAVPRSERTTRDDGILKLMLYLLRNIVVIAPNARLAADGDEEETSRSATINAFQAQDVFALLLTMCSNVGDDFNMQDVILLEILFHLVKGVNVQKLFMDDAQRSAKHTDELDTLLKQESSLRREYAKNAPTRHGRFGTMIWVKRDDAKVSTVSGQDVLKDSQATLQKMDESKKWNRPQPRKTHEDSVLNNDFSTPAHLNSTASRNLRMFVEEFLDSGFNPLFTHVRKALEREADRVVPINSRQFFYTVAWFLDAERARRARQQEMHLQNGKPMKELERDGFGLVASVLDQETLVFLNRSMQISFDQKDWEDLNAEMRCFTQILLTVQEMTQSLLEEDQEIAENIQNRIFYEETTHDRVLAIMREYKGQGFGYLDACTELSHVFLRMLERYSKENVDMQVRSRRRSRRKNMETQVAAPEDNNEEHASDDEDIMEAERICRERKFDFKRFAAKFCNQKCVDTFVAFTKFFRELNSDQLKRAHRYFYRIAFKQEMSVLLFRVDILNLFYTMIKGPGAMDSSKPIFKEWEELVRQVIRRMIKKIDQRPALITELLFSKMNSTLFYLEYGHERQTLPSVRRAPAELEVNPSEATTQEDKIKIVIGALVMDGQADLVAWVSNVLGTAAEERESWEAYEDAQRDEAQGAPRAPNPMIAVLPHDDACKQAMYFNAKLRLLMTLVGFERLGMEDVVGASWVVPSSQGSKDLKGIKLTIDKCLEDPYTGDIEHDPRQMLRRKYKPDDKEHNRQTTLDVDFGSESEGEDVPDGPLFPPNPRSKANAPNDSKTRRKNREAVGEREPIDEDTLEARRKARQENTRARLAKIKSELFVHASDDESDEEADKEFFDLEEKRRKEQAARVRKALLTGVVDEIGRKANKKSERKRLSNSGKSDTQSKRQRRGRTTEALDEDDDIIMDGAVARSSDHATEDDENTSATSDEDDEFDFDDNLAFRRDRDLDRDPVLPSHAEDMQPTDTRELRDNDENAPVATLARRRLRAGFVIDSDSE.

Disordered stretches follow at residues 333–358 (KMDE…NNDF), 564–594 (QVRS…ASDD), 881–981 (DPYT…RARL), and 1023–1145 (ALLT…DENA). The segment covering 585–594 (DNNEEHASDD) has biased composition (acidic residues). Over residues 881 to 893 (DPYTGDIEHDPRQ) the composition is skewed to basic and acidic residues. The segment covering 916–926 (FGSESEGEDVP) has biased composition (acidic residues). The segment covering 966–981 (LEARRKARQENTRARL) has biased composition (basic and acidic residues). The segment covering 1087–1107 (TEDDENTSATSDEDDEFDFDD) has biased composition (acidic residues). Basic and acidic residues predominate over residues 1109–1142 (LAFRRDRDLDRDPVLPSHAEDMQPTDTRELRDND).

Belongs to the timeless family.

It is found in the nucleus. Its function is as follows. Involved in chromosome segregation during meiosis and DNA damage repair. The polypeptide is Topoisomerase 1-associated factor 1 (tof1) (Aspergillus oryzae (strain ATCC 42149 / RIB 40) (Yellow koji mold)).